The primary structure comprises 260 residues: MPRFAANLSMMYNEHAFLDRFAAAAADGFRAVEFLFPYEHAAAELRARLDANGLTQALFNAAPGDWAAGERGLAALPGREADFRGTIGRALEYAGVIGNDRIHVMAGLIPADADRARCRATYLENLAFAANAAAAQGVTVLIEPINTRDMPGYFLNRQDDGQAICKEVGAANLKVQFDCYHCQIVEGDVAMKLKRDIAGIGHIQIAGVPERHEPDVGELNYPYLFEVMDTLGYDGWIGCEYRPRAGTSAGLGWLKPYLGR.

E143 serves as the catalytic Proton donor/acceptor. Mg(2+) is bound by residues E143, D178, Q204, and E240. The Proton donor/acceptor role is filled by E240.

This sequence belongs to the hyi family. OtnI subfamily.

It catalyses the reaction 2-dehydro-L-erythronate = 3-dehydro-L-erythronate. The enzyme catalyses 2-dehydro-D-erythronate = 3-dehydro-D-erythronate. Its function is as follows. Catalyzes the isomerization of 2-oxo-tetronate to 3-oxo-tetronate. The polypeptide is 2-oxo-tetronate isomerase (Cupriavidus necator (strain ATCC 17699 / DSM 428 / KCTC 22496 / NCIMB 10442 / H16 / Stanier 337) (Ralstonia eutropha)).